The following is a 154-amino-acid chain: Toxin YhaV (154 aa).

Homohexamer; forms a complex with PrlF (SohA) with stoichiometry PrlF(2)-YhaV(4), possibly as a YhaV(2)-PrlF(2)-YhaV(2) complex like the MazFE complex. May dimerize in solution.

Toxic component of a type II toxin-antitoxin (TA) system. Has RNase activity in vitro. Acts as a transcription factor. The YhaV/PrlF complex binds the prlF-yhaV operon, probably negatively regulating its expression. The protein is Toxin YhaV (yhaV) of Escherichia coli O6:H1 (strain CFT073 / ATCC 700928 / UPEC).